A 226-amino-acid polypeptide reads, in one-letter code: ATP synthase F(0) complex subunit a (226 aa).

6 helical membrane-spanning segments follow: residues 6 to 26, 68 to 88, 97 to 117, 138 to 158, 164 to 184, and 189 to 209; these read FASFITPTMMGFPIVVAIIMF, WTLMIVSLIMFIGSTNLLGLL, QLSMNLSMAIPLWAGAVITGF, IPMLIIIETISLFIQPMALAV, ITAGHLLMHLIGGATLVLMNI, and ATITFIILLLLTILEFAVALI.

Belongs to the ATPase A chain family. Component of the ATP synthase complex composed at least of ATP5F1A/subunit alpha, ATP5F1B/subunit beta, ATP5MC1/subunit c (homooctomer), MT-ATP6/subunit a, MT-ATP8/subunit 8, ATP5ME/subunit e, ATP5MF/subunit f, ATP5MG/subunit g, ATP5MK/subunit k, ATP5MJ/subunit j, ATP5F1C/subunit gamma, ATP5F1D/subunit delta, ATP5F1E/subunit epsilon, ATP5PF/subunit F6, ATP5PB/subunit b, ATP5PD/subunit d, ATP5PO/subunit OSCP. ATP synthase complex consists of a soluble F(1) head domain (subunits alpha(3) and beta(3)) - the catalytic core - and a membrane F(0) domain - the membrane proton channel (subunits c, a, 8, e, f, g, k and j). These two domains are linked by a central stalk (subunits gamma, delta, and epsilon) rotating inside the F1 region and a stationary peripheral stalk (subunits F6, b, d, and OSCP). Interacts with DNAJC30; interaction is direct.

Its subcellular location is the mitochondrion inner membrane. The enzyme catalyses H(+)(in) = H(+)(out). In terms of biological role, subunit a, of the mitochondrial membrane ATP synthase complex (F(1)F(0) ATP synthase or Complex V) that produces ATP from ADP in the presence of a proton gradient across the membrane which is generated by electron transport complexes of the respiratory chain. ATP synthase complex consist of a soluble F(1) head domain - the catalytic core - and a membrane F(1) domain - the membrane proton channel. These two domains are linked by a central stalk rotating inside the F(1) region and a stationary peripheral stalk. During catalysis, ATP synthesis in the catalytic domain of F(1) is coupled via a rotary mechanism of the central stalk subunits to proton translocation. With the subunit c (ATP5MC1), forms the proton-conducting channel in the F(0) domain, that contains two crucial half-channels (inlet and outlet) that facilitate proton movement from the mitochondrial intermembrane space (IMS) into the matrix. Protons are taken up via the inlet half-channel and released through the outlet half-channel, following a Grotthuss mechanism. The polypeptide is ATP synthase F(0) complex subunit a (Mus musculus (Mouse)).